We begin with the raw amino-acid sequence, 627 residues long: Ski protein homolog (627 aa).

Positions 1–12 are enriched in polar residues; it reads MSDSPIGSSQQV. Disordered regions lie at residues 1-22, 34-58, and 299-318; these read MSDSPIGSSQQVEPEHRTPDLM, LHEETRSDDDDDGQPSTSAKRKDSR, and EYDEAAPHQAPPKRPAMETP.

This sequence belongs to the SKI family. In terms of assembly, may interact with daf-3. As to expression, expressed in ganglia in the head and tail and in the anterior pharynx.

The protein localises to the nucleus. Its function is as follows. Probable component of transcriptional regulatory complex with SMAD protein daf-3. Required to regulate entry into a developmentally arrested larval state known as dauer, in response to harsh environmental conditions. Involved in larvae undergoing cell-cycle arrest during the dauer stage. This is Ski protein homolog from Caenorhabditis elegans.